The primary structure comprises 608 residues: RAS guanyl-releasing protein 2 (608 aa).

The N-terminal Ras-GEF domain maps to 4–126 (TLDLDKGCTV…SLIDIESVPT (123 aa)). A phosphoserine mark is found at Ser-116, Ser-117, and Ser-147. The Ras-GEF domain maps to 154-387 (EPMELAEHLT…YQLSLQREPR (234 aa)). The disordered stretch occupies residues 382–405 (LQREPRSKSSPTSPTSCTPPPRPP). EF-hand domains lie at 426-461 (HIEK…FPYL) and 463-490 (AFGD…SSSV). Ca(2+) is bound by residues Asp-439, Asp-441, Asp-443, His-445, Glu-450, Asp-468, Asn-470, Asp-472, Cys-474, and Glu-479. The Phorbol-ester/DAG-type zinc finger occupies 498 to 548 (VHNFQESNSLRPVACRHCKALILGIYKQGLKCRACGVNCHKQCKERLSVEC). A phosphoserine mark is found at Ser-554 and Ser-575. Residues 555 to 596 (VSLEGSAPSPSPTHTHHRAFSFSLPRPGRRSSRPPEIREEEV) are disordered.

Belongs to the RASGRP family. In terms of assembly, forms a signaling complex with RAP1 and BRAF. Interacts with F-actin. Interacts with RAP1. Detected in megakaryocytes, platelet and neutrophils but not in lymphocytes (at protein level). Isoform 1 and isoform 3 are detected in brain basal glanglia, heart, lung, spleen, liver and kidney interstitial cells.

It is found in the cytoplasm. The protein resides in the cytosol. The protein localises to the cell membrane. It localises to the synapse. Its subcellular location is the synaptosome. It is found in the cell projection. The protein resides in the ruffle membrane. Functions as a calcium- and DAG-regulated nucleotide exchange factor specifically activating Rap through the exchange of bound GDP for GTP. May also activate other GTPases such as RRAS, RRAS2, NRAS, KRAS but not HRAS. Functions in aggregation of platelets and adhesion of T-lymphocytes and neutrophils probably through inside-out integrin activation. May function in the muscarinic acetylcholine receptor M1/CHRM1 signaling pathway. This Mus musculus (Mouse) protein is RAS guanyl-releasing protein 2 (Rasgrp2).